We begin with the raw amino-acid sequence, 217 residues long: 3-demethoxyubiquinol 3-hydroxylase (217 aa).

The Fe cation site is built by glutamate 66, glutamate 96, histidine 99, glutamate 148, glutamate 180, and histidine 183.

Belongs to the COQ7 family. The cofactor is Fe cation.

It localises to the cell membrane. The enzyme catalyses a 5-methoxy-2-methyl-3-(all-trans-polyprenyl)benzene-1,4-diol + AH2 + O2 = a 3-demethylubiquinol + A + H2O. The protein operates within cofactor biosynthesis; ubiquinone biosynthesis. Its function is as follows. Catalyzes the hydroxylation of 2-nonaprenyl-3-methyl-6-methoxy-1,4-benzoquinol during ubiquinone biosynthesis. This chain is 3-demethoxyubiquinol 3-hydroxylase, found in Xanthomonas euvesicatoria pv. vesicatoria (strain 85-10) (Xanthomonas campestris pv. vesicatoria).